Reading from the N-terminus, the 616-residue chain is UPF0329 protein ECU02_1540 (616 aa).

Basic and acidic residues-rich tracts occupy residues 350-359 and 369-381; these read EREKREESKG and GAGEAKEESKEED. Residues 350–427 are disordered; that stretch reads EREKREESKG…RKGDGHHYKI (78 aa). Over residues 382 to 396 the composition is skewed to acidic residues; sequence GKEEEGVEAEEEESA. Basic residues predominate over residues 408-427; the sequence is ARRKKSLKGKRKGDGHHYKI.

It belongs to the UPF0329 family.

This chain is UPF0329 protein ECU02_1540, found in Encephalitozoon cuniculi (strain GB-M1) (Microsporidian parasite).